Reading from the N-terminus, the 504-residue chain is Anaerobic nitric oxide reductase transcription regulator NorR (504 aa).

Aspartate 57 bears the 4-aspartylphosphate mark. Residues 187–416 form the Sigma-54 factor interaction domain; the sequence is MIGLSPGMTQ…LEHAIHRAVV (230 aa). Residues 215 to 222 and 278 to 287 each bind ATP; these read GETGTGKE and ADNGTLFLDE. The H-T-H motif DNA-binding region spans 479–498; that stretch reads WAACARMLETDVANLHRLAK.

Its pathway is nitrogen metabolism; nitric oxide reduction. In terms of biological role, required for the expression of anaerobic nitric oxide (NO) reductase, acts as a transcriptional activator for at least the norVW operon. Activation also requires sigma-54. This Shigella boydii serotype 4 (strain Sb227) protein is Anaerobic nitric oxide reductase transcription regulator NorR.